A 230-amino-acid polypeptide reads, in one-letter code: Orotidine 5'-phosphate decarboxylase (230 aa).

Substrate is bound by residues Asp11, Lys34, 61–70, Thr117, Arg179, Gln188, Gly208, and Arg209; that span reads DLKLHDIPNT. Lys63 acts as the Proton donor in catalysis.

Belongs to the OMP decarboxylase family. Type 1 subfamily. In terms of assembly, homodimer.

The catalysed reaction is orotidine 5'-phosphate + H(+) = UMP + CO2. The protein operates within pyrimidine metabolism; UMP biosynthesis via de novo pathway; UMP from orotate: step 2/2. In terms of biological role, catalyzes the decarboxylation of orotidine 5'-monophosphate (OMP) to uridine 5'-monophosphate (UMP). This is Orotidine 5'-phosphate decarboxylase from Streptococcus pyogenes serotype M6 (strain ATCC BAA-946 / MGAS10394).